The chain runs to 201 residues: 3-isopropylmalate dehydratase small subunit (201 aa).

It belongs to the LeuD family. LeuD type 1 subfamily. As to quaternary structure, heterodimer of LeuC and LeuD.

The enzyme catalyses (2R,3S)-3-isopropylmalate = (2S)-2-isopropylmalate. Its pathway is amino-acid biosynthesis; L-leucine biosynthesis; L-leucine from 3-methyl-2-oxobutanoate: step 2/4. In terms of biological role, catalyzes the isomerization between 2-isopropylmalate and 3-isopropylmalate, via the formation of 2-isopropylmaleate. The chain is 3-isopropylmalate dehydratase small subunit from Kineococcus radiotolerans (strain ATCC BAA-149 / DSM 14245 / SRS30216).